Reading from the N-terminus, the 362-residue chain is Ferrochelatase (362 aa).

The Fe cation site is built by His-228 and Glu-309.

Belongs to the ferrochelatase family.

It is found in the cytoplasm. It carries out the reaction heme b + 2 H(+) = protoporphyrin IX + Fe(2+). The protein operates within porphyrin-containing compound metabolism; protoheme biosynthesis; protoheme from protoporphyrin-IX: step 1/1. In terms of biological role, catalyzes the ferrous insertion into protoporphyrin IX. The polypeptide is Ferrochelatase (Bordetella parapertussis (strain 12822 / ATCC BAA-587 / NCTC 13253)).